The chain runs to 442 residues: tRNA modification GTPase MnmE (442 aa).

Residues arginine 22, glutamate 79, and lysine 119 each coordinate (6S)-5-formyl-5,6,7,8-tetrahydrofolate. The TrmE-type G domain maps to 216-366 (GIKTCLVGAP…LLEKIKSIFA (151 aa)). Residue asparagine 226 coordinates K(+). Residues 226–231 (NSGKSS), 245–251 (SEIPGTT), and 270–273 (DTAG) contribute to the GTP site. Serine 230 lines the Mg(2+) pocket. K(+) is bound by residues serine 245, isoleucine 247, and threonine 250. Position 251 (threonine 251) interacts with Mg(2+). Lysine 442 contacts (6S)-5-formyl-5,6,7,8-tetrahydrofolate.

This sequence belongs to the TRAFAC class TrmE-Era-EngA-EngB-Septin-like GTPase superfamily. TrmE GTPase family. Homodimer. Heterotetramer of two MnmE and two MnmG subunits. Requires K(+) as cofactor.

The protein resides in the cytoplasm. Functionally, exhibits a very high intrinsic GTPase hydrolysis rate. Involved in the addition of a carboxymethylaminomethyl (cmnm) group at the wobble position (U34) of certain tRNAs, forming tRNA-cmnm(5)s(2)U34. The chain is tRNA modification GTPase MnmE from Mesomycoplasma hyopneumoniae (strain J / ATCC 25934 / NCTC 10110) (Mycoplasma hyopneumoniae).